Reading from the N-terminus, the 156-residue chain is Snaclec A14 (156 aa).

The signal sequence occupies residues 1-23; that stretch reads MGRFIFVRVGLLVVFLSLSGTGA. Intrachain disulfides connect Cys-27–Cys-38, Cys-55–Cys-152, and Cys-127–Cys-144. Residues 34 to 153 form the C-type lectin domain; sequence YDQHCYKAFD…CGDDYPFVCK (120 aa). Asn-141 is a glycosylation site (N-linked (GlcNAc...) asparagine).

It belongs to the snaclec family. In terms of assembly, heterodimer; disulfide-linked. In terms of tissue distribution, expressed by the venom gland.

It localises to the secreted. In terms of biological role, interferes with one step of hemostasis (modulation of platelet aggregation, or coagulation cascade, for example). The polypeptide is Snaclec A14 (Macrovipera lebetinus (Levantine viper)).